Here is a 397-residue protein sequence, read N- to C-terminus: uncharacterized protein (397 aa).

The next 4 membrane-spanning stretches (helical) occupy residues 142–162 (WETI…VGIA), 191–211 (SQLL…SVVL), 242–258 (ALTG…TYFL), and 260–280 (APWL…SAGF).

Belongs to the cation diffusion facilitator (CDF) transporter (TC 2.A.4) family. SLC30A subfamily.

It is found in the membrane. This is an uncharacterized protein from Schizosaccharomyces pombe (strain 972 / ATCC 24843) (Fission yeast).